A 1114-amino-acid chain; its full sequence is Zinc finger E-box-binding homeobox 1 (1114 aa).

2 disordered regions span residues 1–105 and 142–163; these read MADG…EVGC and APEEDQRQGTPEASGQDENGTP. Low complexity predominate over residues 15–30; it reads PRRNNVTNYNNVIEAN. Residues 149–160 are compositionally biased toward polar residues; that stretch reads QGTPEASGQDEN. 3 consecutive C2H2-type zinc fingers follow at residues 170–193, 200–222, and 240–262; these read LTCPYCDRGYKRFTSLKEHIKYRH, FSCSLCSYTFAYRTQLDRHMTSH, and FKCTECGKAFKYKHHLKEHLRIH. The segment at 268-292 adopts a C2H2-type 4; atypical zinc-finger fold; it reads YECPNCKKRFSHSGSYSSHISSKKC. Disordered stretches follow at residues 304–326, 491–529, 553–588, and 636–716; these read SGLKTSQCSSPSLSASPGSPARP, NLKKEHSVPTNSCKNEKLPEDLTVKSEKDKNFEGETNDS, KNPPQLPQSSGTEAEKPSSPAPSETGENNLSPGQPP, and QISV…SRNS. The span at 309–326 shows a compositional bias: low complexity; that stretch reads SQCSSPSLSASPGSPARP. The span at 504-523 shows a compositional bias: basic and acidic residues; that stretch reads KNEKLPEDLTVKSEKDKNFE. 2 stretches are compositionally biased toward polar residues: residues 573–584 and 636–681; these read APSETGENNLSP and QISV…QNPA. Positions 581-640 form a DNA-binding region, homeobox; atypical; that stretch reads NLSPGQPPLKNLLSLLKAYYALNAQPSAEELSKIADSVNLPLDVVKKWFEKMQAGQISVQ. The segment covering 682–716 has biased composition (low complexity); the sequence is NTSKSQTSSGGSTQNGSRSSTPSPSPLNLSSSRNS. The CTBP-binding motif motif lies at 767–771; it reads PLNLT. Polar residues-rich tracts occupy residues 852–866 and 874–890; these read AVQETPPKQTQANGS and SSEGVSNVEDQNDSDST. The interval 852 to 898 is disordered; the sequence is AVQETPPKQTQANGSQDERQDTSSEGVSNVEDQNDSDSTPPKKKMRK. C2H2-type zinc fingers lie at residues 904–926 and 932–954; these read YACDLCDKIFQKSSSLLRHKYEH and HECGICKKAFKHKHHLIEHMRLH. The segment at 960–981 adopts a C2H2-type 7; atypical zinc-finger fold; that stretch reads YQCDKCGKRFSHSGSYSQHMNH. A disordered region spans residues 989–1114; it reads EAEERDSTEQ…QVSEEKTNKA (126 aa). A compositionally biased stretch (acidic residues) spans 1031–1047; the sequence is EEEEDSEKEEEEEEEKD. The span at 1048–1062 shows a compositional bias: basic and acidic residues; the sequence is VEGLQEEKECRKLQD. A compositionally biased stretch (acidic residues) spans 1063–1078; the sequence is VEEEEEVEEEEEEEEG. The segment covering 1079-1089 has biased composition (basic and acidic residues); sequence KTEGNKNDDVV.

Belongs to the delta-EF1/ZFH-1 C2H2-type zinc-finger family. In terms of tissue distribution, expression is developmentally regulated with high expression in mesoderm, nervous system and lens.

The protein localises to the nucleus. In terms of biological role, acts as a transcriptional repressor. Positively regulates neuronal differentiation. Represses transcription by binding to the E box-containing promoter. Binds to delta 1-crystallin enhancer core and represses lens-specific transcription. It also binds many other non-lens specific DNA sequences. The polypeptide is Zinc finger E-box-binding homeobox 1 (ZEB1) (Gallus gallus (Chicken)).